Consider the following 201-residue polypeptide: 3-isopropylmalate dehydratase small subunit (201 aa).

Belongs to the LeuD family. LeuD type 1 subfamily. In terms of assembly, heterodimer of LeuC and LeuD.

The enzyme catalyses (2R,3S)-3-isopropylmalate = (2S)-2-isopropylmalate. Its pathway is amino-acid biosynthesis; L-leucine biosynthesis; L-leucine from 3-methyl-2-oxobutanoate: step 2/4. In terms of biological role, catalyzes the isomerization between 2-isopropylmalate and 3-isopropylmalate, via the formation of 2-isopropylmaleate. The chain is 3-isopropylmalate dehydratase small subunit from Azorhizobium caulinodans (strain ATCC 43989 / DSM 5975 / JCM 20966 / LMG 6465 / NBRC 14845 / NCIMB 13405 / ORS 571).